The chain runs to 499 residues: DNA-directed RNA polymerase subunit Rpo2N (499 aa).

This sequence belongs to the RNA polymerase beta chain family. In terms of assembly, part of the RNA polymerase complex.

The protein localises to the cytoplasm. The enzyme catalyses RNA(n) + a ribonucleoside 5'-triphosphate = RNA(n+1) + diphosphate. DNA-dependent RNA polymerase (RNAP) catalyzes the transcription of DNA into RNA using the four ribonucleoside triphosphates as substrates. The Rpo2 subunit (Rpo2N and Rpo2C in this organism) is implicated in DNA promoter recognition and in nucleotide binding. This is DNA-directed RNA polymerase subunit Rpo2N from Methanococcus vannielii (strain ATCC 35089 / DSM 1224 / JCM 13029 / OCM 148 / SB).